The primary structure comprises 334 residues: Ornithine carbamoyltransferase, catabolic (334 aa).

Carbamoyl phosphate is bound by residues 57-60 (STRT), glutamine 84, arginine 108, and 135-138 (HPTQ). L-ornithine-binding positions include asparagine 168, aspartate 232, and 236 to 237 (SM). Residues 274–275 (CL) and arginine 320 each bind carbamoyl phosphate.

The protein belongs to the aspartate/ornithine carbamoyltransferase superfamily. OTCase family.

It localises to the cytoplasm. The enzyme catalyses carbamoyl phosphate + L-ornithine = L-citrulline + phosphate + H(+). It functions in the pathway amino-acid degradation; L-arginine degradation via ADI pathway; carbamoyl phosphate from L-arginine: step 2/2. Functionally, reversibly catalyzes the transfer of the carbamoyl group from carbamoyl phosphate (CP) to the N(epsilon) atom of ornithine (ORN) to produce L-citrulline. This Rhizobium meliloti (strain 1021) (Ensifer meliloti) protein is Ornithine carbamoyltransferase, catabolic (arcB).